Reading from the N-terminus, the 131-residue chain is Acyl carrier protein 3, mitochondrial (131 aa).

A mitochondrion-targeting transit peptide spans 1 to 39 (MHCIRSSILQHLRLRVSVRPTSLLQNENGFKSIGIFNFT). The region spanning 49–124 (DQILSRVIEL…DVATYILSET (76 aa)) is the Carrier domain. The residue at position 84 (serine 84) is an O-(pantetheine 4'-phosphoryl)serine.

Belongs to the acyl carrier protein (ACP) family. In terms of assembly, complex I is composed of at least 49 different subunits. 4'-phosphopantetheine is transferred from CoA to a specific serine of the apo-ACP-like protein.

It localises to the mitochondrion. Its pathway is lipid metabolism; fatty acid biosynthesis. Functionally, carrier of the growing fatty acid chain in fatty acid biosynthesis. May be involved in the synthesis of short and medium chain fatty acids. Accessory and non-catalytic subunit of the mitochondrial membrane respiratory chain NADH dehydrogenase (Complex I), which functions in the transfer of electrons from NADH to the respiratory chain. This Arabidopsis thaliana (Mouse-ear cress) protein is Acyl carrier protein 3, mitochondrial (MTACP2).